The following is a 252-amino-acid chain: Uracil-DNA glycosylase (252 aa).

Residue Asp-78 is the Proton acceptor of the active site.

This sequence belongs to the uracil-DNA glycosylase (UDG) superfamily. UNG family.

It is found in the cytoplasm. It carries out the reaction Hydrolyzes single-stranded DNA or mismatched double-stranded DNA and polynucleotides, releasing free uracil.. Excises uracil residues from the DNA which can arise as a result of misincorporation of dUMP residues by DNA polymerase or due to deamination of cytosine. This chain is Uracil-DNA glycosylase, found in Bordetella avium (strain 197N).